Here is a 154-residue protein sequence, read N- to C-terminus: Endoribonuclease YbeY (154 aa).

3 residues coordinate Zn(2+): H120, H124, and H130.

Belongs to the endoribonuclease YbeY family. Zn(2+) serves as cofactor.

Its subcellular location is the cytoplasm. Its function is as follows. Single strand-specific metallo-endoribonuclease involved in late-stage 70S ribosome quality control and in maturation of the 3' terminus of the 16S rRNA. In Oceanobacillus iheyensis (strain DSM 14371 / CIP 107618 / JCM 11309 / KCTC 3954 / HTE831), this protein is Endoribonuclease YbeY.